The chain runs to 330 residues: Adenylate isopentenyltransferase 8, chloroplastic (330 aa).

The N-terminal 35 residues, 1–35 (MQNLTSTFVSPSMIPITSPRLRLPPPRSVVPMTTV), are a transit peptide targeting the chloroplast. 50–57 (GATGSGKS) contributes to the ATP binding site.

It belongs to the IPP transferase family. Expressed in roots and in immature seeds with highest expression in the chalazal endosperm.

It is found in the plastid. Its subcellular location is the chloroplast. The enzyme catalyses dimethylallyl diphosphate + ADP = N(6)-(dimethylallyl)adenosine 5'-diphosphate + diphosphate. It carries out the reaction dimethylallyl diphosphate + ATP = N(6)-(dimethylallyl)adenosine 5'-triphosphate + diphosphate. Involved in cytokinin biosynthesis. Catalyzes the transfer of an isopentenyl group from dimethylallyl diphosphate (DMAPP) to ATP and ADP. This is Adenylate isopentenyltransferase 8, chloroplastic (IPT8) from Arabidopsis thaliana (Mouse-ear cress).